A 508-amino-acid polypeptide reads, in one-letter code: Monocarboxylate transporter 9 (508 aa).

The next 6 helical transmembrane spans lie at 13–33 (WVIV…PLAV), 53–73 (WVGS…SLFV), 80–100 (PVTI…SLAP), 102–122 (IYFL…LLYT), 137–157 (GLAL…YAAL), and 164–184 (FYGL…ILAC). The segment at 242–263 (GDWGRETSLPKNPTGAAHTKEP) is disordered. 6 helical membrane-spanning segments follow: residues 303-323 (VFSA…PPSL), 341-361 (IPLI…LGIL), 370-390 (LYLY…IPLA), 396-416 (LAIL…FPYV), 431-451 (GILM…VGWF), and 460-480 (IAFY…LLAI).

The protein belongs to the major facilitator superfamily. Monocarboxylate porter (TC 2.A.1.13) family. In terms of tissue distribution, expressed in the liver and kidneys. In the liver localizes on the sinusoidal membrane of the hepatocytes.

It is found in the cell membrane. It catalyses the reaction creatine(in) = creatine(out). The catalysed reaction is (R)-carnitine(in) = (R)-carnitine(out). In terms of biological role, extracellular pH-and Na(+)-sensitive low-affinity creatine transporter. Also functions as a pH-independent carnitine efflux transporter. This chain is Monocarboxylate transporter 9 (Slc16a9), found in Rattus norvegicus (Rat).